The primary structure comprises 498 residues: ATP synthase subunit beta, chloroplastic (498 aa).

172–179 provides a ligand contact to ATP; that stretch reads GGAGVGKT.

Belongs to the ATPase alpha/beta chains family. F-type ATPases have 2 components, CF(1) - the catalytic core - and CF(0) - the membrane proton channel. CF(1) has five subunits: alpha(3), beta(3), gamma(1), delta(1), epsilon(1). CF(0) has four main subunits: a(1), b(1), b'(1) and c(9-12).

The protein localises to the plastid. It is found in the chloroplast thylakoid membrane. The enzyme catalyses ATP + H2O + 4 H(+)(in) = ADP + phosphate + 5 H(+)(out). Its function is as follows. Produces ATP from ADP in the presence of a proton gradient across the membrane. The catalytic sites are hosted primarily by the beta subunits. This is ATP synthase subunit beta, chloroplastic from Liriodendron tulipifera (Tuliptree).